Here is a 236-residue protein sequence, read N- to C-terminus: Thrombin-like enzyme kangshuanmei (236 aa).

The 227-residue stretch at 1–227 (VIGGDECNIN…HLDWIQSIIA (227 aa)) folds into the Peptidase S1 domain. Disulfide bonds link cysteine 7-cysteine 141, cysteine 28-cysteine 44, cysteine 78-cysteine 234, cysteine 120-cysteine 188, cysteine 152-cysteine 167, and cysteine 178-cysteine 203. Histidine 43 serves as the catalytic Charge relay system. Asparagine 81 is a glycosylation site (N-linked (GlcNAc...) asparagine). The Charge relay system role is filled by aspartate 88. N-linked (GlcNAc...) asparagine glycosylation is found at asparagine 99 and asparagine 148. Serine 182 acts as the Charge relay system in catalysis. N-linked (GlcNAc...) asparagine glycosylation occurs at asparagine 229.

Belongs to the peptidase S1 family. Snake venom subfamily. Monomer. In terms of processing, N-glycosylated by units composed of Fuc, Man, GlcNAc, Gal and NeuAC residues. As to expression, expressed by the venom gland.

It is found in the secreted. Inhibited by 4-(2-aminoethyl)-benzensulfonyl fluoride. Not inhibited by antithrombin-III. Thrombin-like snake venom serine protease. Cleaves bonds after Arg and Lys, converts fibrinogen (FGA and FGB) to fibrin and releases both fibrinopeptides A and B, and fibrinogen peptide Bbeta1-42. Has a blood clotting activity. In Gloydius brevicauda (Korean slamosa snake), this protein is Thrombin-like enzyme kangshuanmei.